The primary structure comprises 52 residues: UPF0181 protein NTHI1697 (52 aa).

The protein belongs to the UPF0181 family.

The polypeptide is UPF0181 protein NTHI1697 (Haemophilus influenzae (strain 86-028NP)).